The chain runs to 457 residues: Na(+)/H(+) antiporter NhaA (457 aa).

The next 11 membrane-spanning stretches (helical) occupy residues 33 to 53 (ASGI…NSPL), 76 to 96 (FSLA…VVGM), 114 to 134 (LLPL…FLAF), 142 to 162 (AGWG…LTLL), 172 to 192 (VFVT…IALF), 196 to 216 (GLQL…ALMS), 235 to 255 (YALH…GLAI), 308 to 328 (FVHA…ALAN), 349 to 369 (TALA…WIAV), 385 to 405 (LIGV…IAGL), and 419 to 439 (VGIL…LRLT).

This sequence belongs to the NhaA Na(+)/H(+) (TC 2.A.33) antiporter family.

Its subcellular location is the cell inner membrane. The enzyme catalyses Na(+)(in) + 2 H(+)(out) = Na(+)(out) + 2 H(+)(in). Functionally, na(+)/H(+) antiporter that extrudes sodium in exchange for external protons. In Anaeromyxobacter sp. (strain Fw109-5), this protein is Na(+)/H(+) antiporter NhaA.